Here is a 355-residue protein sequence, read N- to C-terminus: Phenylalanine--tRNA ligase alpha subunit (355 aa).

Position 273 (Glu-273) interacts with Mg(2+).

It belongs to the class-II aminoacyl-tRNA synthetase family. Phe-tRNA synthetase alpha subunit type 1 subfamily. Tetramer of two alpha and two beta subunits. Requires Mg(2+) as cofactor.

It is found in the cytoplasm. The enzyme catalyses tRNA(Phe) + L-phenylalanine + ATP = L-phenylalanyl-tRNA(Phe) + AMP + diphosphate + H(+). In Bifidobacterium adolescentis (strain ATCC 15703 / DSM 20083 / NCTC 11814 / E194a), this protein is Phenylalanine--tRNA ligase alpha subunit.